A 511-amino-acid chain; its full sequence is Histidine ammonia-lyase (511 aa).

Residues 142 to 144 (ASG) constitute a cross-link (5-imidazolinone (Ala-Gly)). S143 is subject to 2,3-didehydroalanine (Ser).

This sequence belongs to the PAL/histidase family. In terms of processing, contains an active site 4-methylidene-imidazol-5-one (MIO), which is formed autocatalytically by cyclization and dehydration of residues Ala-Ser-Gly.

The protein localises to the cytoplasm. The catalysed reaction is L-histidine = trans-urocanate + NH4(+). It functions in the pathway amino-acid degradation; L-histidine degradation into L-glutamate; N-formimidoyl-L-glutamate from L-histidine: step 1/3. This is Histidine ammonia-lyase from Caulobacter sp. (strain K31).